The chain runs to 170 residues: Adenine phosphoribosyltransferase (170 aa).

The protein belongs to the purine/pyrimidine phosphoribosyltransferase family. As to quaternary structure, homodimer.

The protein resides in the cytoplasm. It catalyses the reaction AMP + diphosphate = 5-phospho-alpha-D-ribose 1-diphosphate + adenine. It functions in the pathway purine metabolism; AMP biosynthesis via salvage pathway; AMP from adenine: step 1/1. Its function is as follows. Catalyzes a salvage reaction resulting in the formation of AMP, that is energically less costly than de novo synthesis. The chain is Adenine phosphoribosyltransferase from Mycoplasma mycoides subsp. mycoides SC (strain CCUG 32753 / NCTC 10114 / PG1).